The sequence spans 454 residues: Transcription factor bHLH123 (454 aa).

A compositionally biased stretch (low complexity) spans 101 to 113 (SNANANTTSSTSS). 4 disordered regions span residues 101–127 (SNANANTTSSTSSYQLQESDSSHHHQA), 185–228 (ATTT…QFGS), 270–348 (AAAG…KRKE), and 398–417 (GASLQHQQSDHSTELEVSEE). 2 stretches are compositionally biased toward polar residues: residues 185–195 (ATTTTPNSSSG) and 207–228 (SSDQQPSRNHQQSSLGYSQFGS). Residues 303-324 (EQPKNISEIRDSSSNEVKRGGN) are compositionally biased toward basic and acidic residues. The region spanning 334–383 (KSEAASPSPAFKRKEKMGDRIAALQQLVSPFGKTDAASVLSEAIEYIKFL) is the bHLH domain.

As to quaternary structure, homodimer.

The protein localises to the nucleus. This Arabidopsis thaliana (Mouse-ear cress) protein is Transcription factor bHLH123 (BHLH123).